The following is a 458-amino-acid chain: MYVPEEIIETVRMIEYQHLDIRTTTLGVNLKDCADKDLDLLKENIYDKITSLGGNLVETAEKVSQKYGIPIVNKRISVTPIGLIIGSTLKGLNEEESVDACVEVGITLDKIAKDVGVDFIGGYSALVHKRATPEEKMLIRSIPKLMTKTDKVCASVNVATTKSGINMYAVKKMGEIIKETSECTKDAIGCAKIVVFCNAPEDNPFMAGAFHGPGEGDAVINAGVSGPGVVRAVVEKLKGKDIGTISEEIKKTAFKITRMGELVGREVANELNVDFGIVDLSLAPTPAPGDSIANILEAMGLERCGTHGTTAALALLNDAVKKGGAMASSYVGGLSGAFIPVSEDAGMIEAVEVGALNLSKLEAMTCVCSVGLDMIAIPGKTPASTVSAIIADEMAIGMINKKTTAVRLIPVPGKDVGEYVEYGGLLGTAPIMEVFEFSSEEFINRGGRIPAPIQSLTN.

The protein belongs to the UPF0210 family.

The chain is UPF0210 protein Mevan_0738 from Methanococcus vannielii (strain ATCC 35089 / DSM 1224 / JCM 13029 / OCM 148 / SB).